Reading from the N-terminus, the 142-residue chain is Small ribosomal subunit protein bS6 (142 aa).

The segment covering 113–136 (IKKEPREPREPRAPREPKAEKIEE) has biased composition (basic and acidic residues). A disordered region spans residues 113–142 (IKKEPREPREPRAPREPKAEKIEEQTFSEE).

The protein belongs to the bacterial ribosomal protein bS6 family.

Binds together with bS18 to 16S ribosomal RNA. This chain is Small ribosomal subunit protein bS6, found in Campylobacter curvus (strain 525.92).